Consider the following 294-residue polypeptide: Flavin-dependent thymidylate synthase (294 aa).

Residues 27–250 (GFIRVIDYMG…PFTYEAFEEY (224 aa)) form the ThyX domain. FAD contacts are provided by residues Thr73, 96–98 (RHR), and Glu104. DUMP is bound by residues 93 to 96 (QWIR), 104 to 108 (EYSAR), and Arg189. The ThyX motif signature appears at 96-106 (RHRTASVNEYS). FAD is bound by residues 205-207 (NLH) and His211. Position 216 (Arg216) interacts with dUMP. The active-site Involved in ionization of N3 of dUMP, leading to its activation is Arg216.

The protein belongs to the thymidylate synthase ThyX family. In terms of assembly, homotetramer. Requires FAD as cofactor.

The catalysed reaction is dUMP + (6R)-5,10-methylene-5,6,7,8-tetrahydrofolate + NADPH + H(+) = dTMP + (6S)-5,6,7,8-tetrahydrofolate + NADP(+). The protein operates within pyrimidine metabolism; dTTP biosynthesis. Catalyzes the reductive methylation of 2'-deoxyuridine-5'-monophosphate (dUMP) to 2'-deoxythymidine-5'-monophosphate (dTMP) while utilizing 5,10-methylenetetrahydrofolate (mTHF) as the methyl donor, and NADPH and FADH(2) as the reductant. This is Flavin-dependent thymidylate synthase from Rickettsia typhi (strain ATCC VR-144 / Wilmington).